Consider the following 511-residue polypeptide: Bifunctional purine biosynthesis protein PurH (511 aa).

The MGS-like domain occupies 1–145; sequence MKRRAIISVS…KNHAYVTAVV (145 aa).

It belongs to the PurH family.

It carries out the reaction (6R)-10-formyltetrahydrofolate + 5-amino-1-(5-phospho-beta-D-ribosyl)imidazole-4-carboxamide = 5-formamido-1-(5-phospho-D-ribosyl)imidazole-4-carboxamide + (6S)-5,6,7,8-tetrahydrofolate. The catalysed reaction is IMP + H2O = 5-formamido-1-(5-phospho-D-ribosyl)imidazole-4-carboxamide. It participates in purine metabolism; IMP biosynthesis via de novo pathway; 5-formamido-1-(5-phospho-D-ribosyl)imidazole-4-carboxamide from 5-amino-1-(5-phospho-D-ribosyl)imidazole-4-carboxamide (10-formyl THF route): step 1/1. Its pathway is purine metabolism; IMP biosynthesis via de novo pathway; IMP from 5-formamido-1-(5-phospho-D-ribosyl)imidazole-4-carboxamide: step 1/1. This Anoxybacillus flavithermus (strain DSM 21510 / WK1) protein is Bifunctional purine biosynthesis protein PurH.